A 108-amino-acid chain; its full sequence is Synaptic plasticity regulator PANTS (108 aa).

The tract at residues 58 to 108 is disordered; the sequence is KNHSTQAKDSLQESERKRLADQRKFTPVWELRQKPPSDWHLPLNQGEPQDP. Basic and acidic residues predominate over residues 67 to 81; that stretch reads SLQESERKRLADQRK.

It belongs to the UPF0545 family. Post-translationally, rapidly degraded by proteolysis following neuronal stimulation, resulting in increased AMPA receptor clustering.

It is found in the synapse. It localises to the synaptic cleft. Its function is as follows. Negatively regulates long-term potentiation and modulates adult synaptic plasticity. This Danio rerio (Zebrafish) protein is Synaptic plasticity regulator PANTS.